The sequence spans 284 residues: Nucleotide-binding protein SO_3964 (284 aa).

Position 8 to 15 (8 to 15) interacts with ATP; it reads GRSGSGKS. 56–59 provides a ligand contact to GTP; sequence DVRN.

Belongs to the RapZ-like family.

In terms of biological role, displays ATPase and GTPase activities. The polypeptide is Nucleotide-binding protein SO_3964 (Shewanella oneidensis (strain ATCC 700550 / JCM 31522 / CIP 106686 / LMG 19005 / NCIMB 14063 / MR-1)).